Here is a 250-residue protein sequence, read N- to C-terminus: Uracil-DNA glycosylase (250 aa).

D78 functions as the Proton acceptor in the catalytic mechanism. The interval 228 to 250 is disordered; the sequence is RGQKPVDWSGEQNNASRQGEFAL.

The protein belongs to the uracil-DNA glycosylase (UDG) superfamily. UNG family.

The protein localises to the cytoplasm. The catalysed reaction is Hydrolyzes single-stranded DNA or mismatched double-stranded DNA and polynucleotides, releasing free uracil.. Its function is as follows. Excises uracil residues from the DNA which can arise as a result of misincorporation of dUMP residues by DNA polymerase or due to deamination of cytosine. The protein is Uracil-DNA glycosylase of Bordetella parapertussis (strain 12822 / ATCC BAA-587 / NCTC 13253).